The primary structure comprises 292 residues: Pyridoxal 5'-phosphate synthase subunit PdxS (292 aa).

Position 22 (Asp22) interacts with D-ribose 5-phosphate. Lys79 serves as the catalytic Schiff-base intermediate with D-ribose 5-phosphate. Gly151 serves as a coordination point for D-ribose 5-phosphate. Position 163 (Arg163) interacts with D-glyceraldehyde 3-phosphate. D-ribose 5-phosphate is bound by residues Gly212 and 233-234 (GS).

This sequence belongs to the PdxS/SNZ family. In the presence of PdxT, forms a dodecamer of heterodimers.

The catalysed reaction is aldehydo-D-ribose 5-phosphate + D-glyceraldehyde 3-phosphate + L-glutamine = pyridoxal 5'-phosphate + L-glutamate + phosphate + 3 H2O + H(+). Its pathway is cofactor biosynthesis; pyridoxal 5'-phosphate biosynthesis. In terms of biological role, catalyzes the formation of pyridoxal 5'-phosphate from ribose 5-phosphate (RBP), glyceraldehyde 3-phosphate (G3P) and ammonia. The ammonia is provided by the PdxT subunit. Can also use ribulose 5-phosphate and dihydroxyacetone phosphate as substrates, resulting from enzyme-catalyzed isomerization of RBP and G3P, respectively. This is Pyridoxal 5'-phosphate synthase subunit PdxS from Caldanaerobacter subterraneus subsp. tengcongensis (strain DSM 15242 / JCM 11007 / NBRC 100824 / MB4) (Thermoanaerobacter tengcongensis).